The primary structure comprises 180 residues: Large ribosomal subunit protein uL6 (180 aa).

This sequence belongs to the universal ribosomal protein uL6 family. As to quaternary structure, part of the 50S ribosomal subunit.

Its function is as follows. This protein binds to the 23S rRNA, and is important in its secondary structure. It is located near the subunit interface in the base of the L7/L12 stalk, and near the tRNA binding site of the peptidyltransferase center. This is Large ribosomal subunit protein uL6 from Protochlamydia amoebophila (strain UWE25).